A 340-amino-acid polypeptide reads, in one-letter code: Large ribosomal subunit protein uL10 (340 aa).

Residues 305-340 (APQPAEEKVEEAEEEEEEEEEASEEEALAGLGALFG) form a disordered region. The span at 312–331 (KVEEAEEEEEEEEEASEEEA) shows a compositional bias: acidic residues.

It belongs to the universal ribosomal protein uL10 family. In terms of assembly, part of the 50S ribosomal subunit. Forms part of the ribosomal stalk which helps the ribosome interact with GTP-bound translation factors. Forms a heptameric L10(L12)2(L12)2(L12)2 complex, where L10 forms an elongated spine to which the L12 dimers bind in a sequential fashion.

Forms part of the ribosomal stalk, playing a central role in the interaction of the ribosome with GTP-bound translation factors. The protein is Large ribosomal subunit protein uL10 of Thermococcus gammatolerans (strain DSM 15229 / JCM 11827 / EJ3).